The following is a 342-amino-acid chain: Eukaryotic translation initiation factor 3 subunit F (342 aa).

One can recognise an MPN domain in the interval 30 to 166 (VAIQPQAVFS…SRTYISAPIG (137 aa)). The disordered stretch occupies residues 310–342 (TDALAGDGQKDGGDRKQGGDRRNKGRQQRTQEA). The segment covering 317-331 (GQKDGGDRKQGGDRR) has biased composition (basic and acidic residues).

It belongs to the eIF-3 subunit F family. Component of the eukaryotic translation initiation factor 3 (eIF-3) complex.

The protein localises to the cytoplasm. Functionally, component of the eukaryotic translation initiation factor 3 (eIF-3) complex, which is involved in protein synthesis of a specialized repertoire of mRNAs and, together with other initiation factors, stimulates binding of mRNA and methionyl-tRNAi to the 40S ribosome. The eIF-3 complex specifically targets and initiates translation of a subset of mRNAs involved in cell proliferation. The chain is Eukaryotic translation initiation factor 3 subunit F from Phaeosphaeria nodorum (strain SN15 / ATCC MYA-4574 / FGSC 10173) (Glume blotch fungus).